The primary structure comprises 51 residues: U-Asilidin(1)-Eru1a (51 aa).

An N-terminal signal peptide occupies residues 1–23; it reads MANYIDVLSFLAIICATVLATLA. Disulfide bonds link cysteine 26–cysteine 40, cysteine 33–cysteine 44, and cysteine 39–cysteine 49.

It belongs to the asilidin-1 family. Expressed by the venom gland. The most highly expressed peptides U-Asilidin1-Mar1a is around 3000 times higher expressed in the venom thoracic glands compared to its body tissues.

It is found in the secreted. Induces neurotoxic effect on honeybees, including slow movements, disorientation and paralysis. Since it provokes similar symptoms than omega-atracotoxin, it is probable that it acts in the same way by inhibiting voltage-gated calcium channels. This Eutolmus rufibarbis (Golden-tabbed robberfly) protein is U-Asilidin(1)-Eru1a.